Here is an 83-residue protein sequence, read N- to C-terminus: Cytochrome b559 subunit alpha (83 aa).

The chain crosses the membrane as a helical span at residues 21 to 35 (VIHSITIPSLFIAGW). Residue histidine 23 coordinates heme.

This sequence belongs to the PsbE/PsbF family. Heterodimer of an alpha subunit and a beta subunit. PSII is composed of 1 copy each of membrane proteins PsbA, PsbB, PsbC, PsbD, PsbE, PsbF, PsbH, PsbI, PsbJ, PsbK, PsbL, PsbM, PsbT, PsbX, PsbY, PsbZ, Psb30/Ycf12, at least 3 peripheral proteins of the oxygen-evolving complex and a large number of cofactors. It forms dimeric complexes. The cofactor is heme b.

It localises to the plastid. It is found in the chloroplast thylakoid membrane. This b-type cytochrome is tightly associated with the reaction center of photosystem II (PSII). PSII is a light-driven water:plastoquinone oxidoreductase that uses light energy to abstract electrons from H(2)O, generating O(2) and a proton gradient subsequently used for ATP formation. It consists of a core antenna complex that captures photons, and an electron transfer chain that converts photonic excitation into a charge separation. The polypeptide is Cytochrome b559 subunit alpha (Anthoceros angustus (Hornwort)).